A 249-amino-acid polypeptide reads, in one-letter code: uncharacterized protein (249 aa).

2 helical membrane passes run 49 to 69 (ILLS…CYLL) and 223 to 243 (IVMS…VHHL).

It localises to the cell membrane. This is an uncharacterized protein from Bacillus anthracis.